We begin with the raw amino-acid sequence, 311 residues long: Large ribosomal subunit protein uL18 (311 aa).

Belongs to the universal ribosomal protein uL18 family. As to quaternary structure, component of the large ribosomal subunit (LSU).

It localises to the cytoplasm. It is found in the nucleus. In terms of biological role, component of the ribosome, a large ribonucleoprotein complex responsible for the synthesis of proteins in the cell. The small ribosomal subunit (SSU) binds messenger RNAs (mRNAs) and translates the encoded message by selecting cognate aminoacyl-transfer RNA (tRNA) molecules. The large subunit (LSU) contains the ribosomal catalytic site termed the peptidyl transferase center (PTC), which catalyzes the formation of peptide bonds, thereby polymerizing the amino acids delivered by tRNAs into a polypeptide chain. The nascent polypeptides leave the ribosome through a tunnel in the LSU and interact with protein factors that function in enzymatic processing, targeting, and the membrane insertion of nascent chains at the exit of the ribosomal tunnel. The sequence is that of Large ribosomal subunit protein uL18 (RPL5) from Eimeria tenella (Coccidian parasite).